We begin with the raw amino-acid sequence, 299 residues long: tRNA dimethylallyltransferase (299 aa).

13-20 (GPTASGKT) provides a ligand contact to ATP. Residue 15 to 20 (TASGKT) participates in substrate binding. The interaction with substrate tRNA stretch occupies residues 38 to 41 (DSRQ).

The protein belongs to the IPP transferase family. As to quaternary structure, monomer. Mg(2+) serves as cofactor.

The catalysed reaction is adenosine(37) in tRNA + dimethylallyl diphosphate = N(6)-dimethylallyladenosine(37) in tRNA + diphosphate. Catalyzes the transfer of a dimethylallyl group onto the adenine at position 37 in tRNAs that read codons beginning with uridine, leading to the formation of N6-(dimethylallyl)adenosine (i(6)A). This chain is tRNA dimethylallyltransferase, found in Prochlorococcus marinus (strain MIT 9301).